Reading from the N-terminus, the 94-residue chain is Anaphase-promoting complex subunit 11 (94 aa).

The RING-type zinc-finger motif lies at 35–78 (CPQCTSPGDNCPIVWGKCKHIFHAHCIQNWLATSGSQGQCPMDR).

In terms of assembly, the APC/C is composed of at least 13 subunits: apc1, apc2, nuc2, apc4, apc5, cut9, apc8, apc10, apc11, hcn1, apc13, apc14 and apc15.

Component of the anaphase-promoting complex/cyclosome (APC/C), a cell cycle-regulated E3 ubiquitin-protein ligase complex that controls progression through mitosis and the G1 phase of the cell cycle. The APC/C is thought to confer substrate specificity and, in the presence of ubiquitin-conjugating E2 enzymes, it catalyzes the formation of protein-ubiquitin conjugates that are subsequently degraded by the 26S proteasome. The polypeptide is Anaphase-promoting complex subunit 11 (apc11) (Schizosaccharomyces pombe (strain 972 / ATCC 24843) (Fission yeast)).